A 243-amino-acid chain; its full sequence is 3-deoxy-manno-octulosonate cytidylyltransferase (243 aa).

Belongs to the KdsB family.

It is found in the cytoplasm. The enzyme catalyses 3-deoxy-alpha-D-manno-oct-2-ulosonate + CTP = CMP-3-deoxy-beta-D-manno-octulosonate + diphosphate. It participates in nucleotide-sugar biosynthesis; CMP-3-deoxy-D-manno-octulosonate biosynthesis; CMP-3-deoxy-D-manno-octulosonate from 3-deoxy-D-manno-octulosonate and CTP: step 1/1. It functions in the pathway bacterial outer membrane biogenesis; lipopolysaccharide biosynthesis. Activates KDO (a required 8-carbon sugar) for incorporation into bacterial lipopolysaccharide in Gram-negative bacteria. In Helicobacter pylori (strain ATCC 700392 / 26695) (Campylobacter pylori), this protein is 3-deoxy-manno-octulosonate cytidylyltransferase.